The sequence spans 220 residues: Acetate CoA-transferase subunit alpha (220 aa).

Glycine 24–glycine 30 provides a ligand contact to CoA.

The protein belongs to the 3-oxoacid CoA-transferase subunit A family. As to quaternary structure, heterotetramer composed of two alpha subunits (AtoD) and two beta subunits (AtoA).

It is found in the cytoplasm. It carries out the reaction an acyl-CoA + acetate = a carboxylate + acetyl-CoA. The catalysed reaction is acetoacetate + acetyl-CoA = acetoacetyl-CoA + acetate. It catalyses the reaction butanoate + acetyl-CoA = butanoyl-CoA + acetate. The enzyme catalyses acetoacetate + butanoyl-CoA = acetoacetyl-CoA + butanoate. Its pathway is lipid metabolism; short-chain fatty acid metabolism. Inhibited by p-chloromercuribenzoate. In terms of biological role, coenzyme A transferase which is involved in short-chain fatty acid degradation and catalyzes the activation of short-chain fatty acids to their respective CoA thiolesters. During acetoacetate degradation, catalyzes the transfer of CoA from acetyl-CoA to acetoacetate by a mechanism involving a covalent enzyme-CoA compound as a reaction intermediate. Utilizes a variety of short chain acyl-CoA and carboxylic acid substrates but exhibits maximal activity with normal and 3-keto substrates. This chain is Acetate CoA-transferase subunit alpha, found in Escherichia coli (strain K12).